The following is a 165-amino-acid chain: Putative universal stress protein SH1215 (165 aa).

This sequence belongs to the universal stress protein A family.

The protein resides in the cytoplasm. The protein is Putative universal stress protein SH1215 of Staphylococcus haemolyticus (strain JCSC1435).